Here is a 155-residue protein sequence, read N- to C-terminus: RNA pyrophosphohydrolase (155 aa).

The 145-residue stretch at Glu5–Ser149 folds into the Nudix hydrolase domain. A Nudix box motif is present at residues Gly39 to Gly60.

This sequence belongs to the Nudix hydrolase family. RppH subfamily. A divalent metal cation serves as cofactor.

Accelerates the degradation of transcripts by removing pyrophosphate from the 5'-end of triphosphorylated RNA, leading to a more labile monophosphorylated state that can stimulate subsequent ribonuclease cleavage. The chain is RNA pyrophosphohydrolase from Zymomonas mobilis subsp. mobilis (strain ATCC 31821 / ZM4 / CP4).